The sequence spans 339 residues: MTVRVAINGFGRIGRNVVRALYESGRRAEITVVAINELADAAGMAHLLKYDTSHGRFAWEVRQERDQLFVGDDAIRVLHERSLQSLPWRELGVDVVLDCTGVYGSREHGEAHIAAGAKKVLFSHPGSNDLDATVVYGVNQDQLRAEHRIVSNASCTTNCIIPVIKLLDDAYGIESGTVTTIHSAMHDQQVIDAYHPDLRRTRAASQSIIPIDTKLAAGITRFFPQFNDRFEAIAVRVPTINVTAIDLSVTVKKPVKANEVNLLLQKAAQGAFHGIVDYTELPLVSVDFNHDPHSAIVDGTQTRVSGAHLIKTLVWCDNEWGFANRMLDTTLAMATVAFR.

NAD(+) is bound by residues 12 to 13 (RI) and Arg81. Substrate is bound by residues 154–156 (SCT), Arg200, 213–214 (TK), and Arg236. The active-site Nucleophile is the Cys155. Asn318 provides a ligand contact to NAD(+).

Belongs to the glyceraldehyde-3-phosphate dehydrogenase family. Epd subfamily. In terms of assembly, homotetramer.

It is found in the cytoplasm. It carries out the reaction D-erythrose 4-phosphate + NAD(+) + H2O = 4-phospho-D-erythronate + NADH + 2 H(+). It functions in the pathway cofactor biosynthesis; pyridoxine 5'-phosphate biosynthesis; pyridoxine 5'-phosphate from D-erythrose 4-phosphate: step 1/5. Catalyzes the NAD-dependent conversion of D-erythrose 4-phosphate to 4-phosphoerythronate. The polypeptide is D-erythrose-4-phosphate dehydrogenase (Shigella dysenteriae serotype 1 (strain Sd197)).